Reading from the N-terminus, the 278-residue chain is MEIELAKSYGFCFGVKRAIKKAEQIKDAATIGPLIHNNEEITRLWKNYNVKTLNDISELSTEQKAIIRTHGITKQDLEKLKQKDIEIFDATCPFVTKPQKICEQMSKEGYEVVIFGDENHPEVKGVRSYVSTKAYVVLDEKELFDIKLPSKIAVVSQTTKKIEKFMEIVNFLMLKVKEVRVFNTICDATFKNQEAINELAKKSDVMVIVGGKNSANTKQLFLIAKNYCEDSYLIENEKEIQKEWFSGKEKCGVSAGASTPDWVIDLVLEKIKEYTKIN.

Cys-12 is a binding site for [4Fe-4S] cluster. (2E)-4-hydroxy-3-methylbut-2-enyl diphosphate-binding residues include His-36 and His-70. Positions 36 and 70 each coordinate dimethylallyl diphosphate. The isopentenyl diphosphate site is built by His-36 and His-70. Cys-92 is a [4Fe-4S] cluster binding site. A (2E)-4-hydroxy-3-methylbut-2-enyl diphosphate-binding site is contributed by His-120. His-120 contributes to the dimethylallyl diphosphate binding site. His-120 lines the isopentenyl diphosphate pocket. Glu-122 acts as the Proton donor in catalysis. Thr-158 contributes to the (2E)-4-hydroxy-3-methylbut-2-enyl diphosphate binding site. Cys-186 is a binding site for [4Fe-4S] cluster. 3 residues coordinate (2E)-4-hydroxy-3-methylbut-2-enyl diphosphate: Ser-214, Asn-216, and Ser-258. Dimethylallyl diphosphate contacts are provided by Ser-214, Asn-216, and Ser-258. Isopentenyl diphosphate-binding residues include Ser-214, Asn-216, and Ser-258.

The protein belongs to the IspH family. [4Fe-4S] cluster serves as cofactor.

The enzyme catalyses isopentenyl diphosphate + 2 oxidized [2Fe-2S]-[ferredoxin] + H2O = (2E)-4-hydroxy-3-methylbut-2-enyl diphosphate + 2 reduced [2Fe-2S]-[ferredoxin] + 2 H(+). The catalysed reaction is dimethylallyl diphosphate + 2 oxidized [2Fe-2S]-[ferredoxin] + H2O = (2E)-4-hydroxy-3-methylbut-2-enyl diphosphate + 2 reduced [2Fe-2S]-[ferredoxin] + 2 H(+). Its pathway is isoprenoid biosynthesis; dimethylallyl diphosphate biosynthesis; dimethylallyl diphosphate from (2E)-4-hydroxy-3-methylbutenyl diphosphate: step 1/1. The protein operates within isoprenoid biosynthesis; isopentenyl diphosphate biosynthesis via DXP pathway; isopentenyl diphosphate from 1-deoxy-D-xylulose 5-phosphate: step 6/6. In terms of biological role, catalyzes the conversion of 1-hydroxy-2-methyl-2-(E)-butenyl 4-diphosphate (HMBPP) into a mixture of isopentenyl diphosphate (IPP) and dimethylallyl diphosphate (DMAPP). Acts in the terminal step of the DOXP/MEP pathway for isoprenoid precursor biosynthesis. In Campylobacter lari (strain RM2100 / D67 / ATCC BAA-1060), this protein is 4-hydroxy-3-methylbut-2-enyl diphosphate reductase.